The primary structure comprises 30 residues: Alanine carboxypeptidase (30 aa).

The catalysed reaction is Release of a C-terminal alanine from a peptide or a variety of pteroyl or acyl groups.. The chain is Alanine carboxypeptidase from Geobacillus stearothermophilus (Bacillus stearothermophilus).